Here is a 215-residue protein sequence, read N- to C-terminus: Thymidylate kinase (215 aa).

7–14 (GMEGSGKS) is a binding site for ATP.

Belongs to the thymidylate kinase family.

It catalyses the reaction dTMP + ATP = dTDP + ADP. Its function is as follows. Phosphorylation of dTMP to form dTDP in both de novo and salvage pathways of dTTP synthesis. This is Thymidylate kinase from Nitratidesulfovibrio vulgaris (strain DSM 19637 / Miyazaki F) (Desulfovibrio vulgaris).